Consider the following 272-residue polypeptide: Imidazole glycerol phosphate synthase subunit HisF (272 aa).

Residues Asp11 and Asp130 contribute to the active site.

Belongs to the HisA/HisF family. In terms of assembly, heterodimer of HisH and HisF.

It is found in the cytoplasm. It catalyses the reaction 5-[(5-phospho-1-deoxy-D-ribulos-1-ylimino)methylamino]-1-(5-phospho-beta-D-ribosyl)imidazole-4-carboxamide + L-glutamine = D-erythro-1-(imidazol-4-yl)glycerol 3-phosphate + 5-amino-1-(5-phospho-beta-D-ribosyl)imidazole-4-carboxamide + L-glutamate + H(+). It participates in amino-acid biosynthesis; L-histidine biosynthesis; L-histidine from 5-phospho-alpha-D-ribose 1-diphosphate: step 5/9. Functionally, IGPS catalyzes the conversion of PRFAR and glutamine to IGP, AICAR and glutamate. The HisF subunit catalyzes the cyclization activity that produces IGP and AICAR from PRFAR using the ammonia provided by the HisH subunit. This chain is Imidazole glycerol phosphate synthase subunit HisF, found in Methanococcus maripaludis (strain C7 / ATCC BAA-1331).